A 99-amino-acid polypeptide reads, in one-letter code: DNA-directed RNA polymerase subunit omega (99 aa).

This sequence belongs to the RNA polymerase subunit omega family. In terms of assembly, the RNAP catalytic core consists of 2 alpha, 1 beta, 1 beta' and 1 omega subunit. When a sigma factor is associated with the core the holoenzyme is formed, which can initiate transcription.

It catalyses the reaction RNA(n) + a ribonucleoside 5'-triphosphate = RNA(n+1) + diphosphate. In terms of biological role, promotes RNA polymerase assembly. Latches the N- and C-terminal regions of the beta' subunit thereby facilitating its interaction with the beta and alpha subunits. This Xylella fastidiosa (strain 9a5c) protein is DNA-directed RNA polymerase subunit omega (rpoZ).